The chain runs to 175 residues: uncharacterized protein (175 aa).

The HTH marR-type domain maps to Leu-10–Thr-157. Positions Val-68–Gly-91 form a DNA-binding region, H-T-H motif.

The protein localises to the cytoplasm. This is an uncharacterized protein from Bacillus subtilis (strain 168).